The following is a 257-amino-acid chain: 3-alpha-hydroxysteroid dehydrogenase/carbonyl reductase (257 aa).

Residues 8 to 13, Asp32, 41 to 42, and Gly71 each bind NAD(+); these read GCATGI and DL. Ser114 contributes to the substrate binding site. NAD(+) contacts are provided by Tyr155 and Lys159. Tyr155 (proton acceptor) is an active-site residue.

Belongs to the short-chain dehydrogenases/reductases (SDR) family. Homodimer.

The protein resides in the cytoplasm. It carries out the reaction a 3alpha-hydroxysteroid + NADP(+) = a 3-oxosteroid + NADPH + H(+). It catalyses the reaction a 3alpha-hydroxysteroid + NAD(+) = a 3-oxosteroid + NADH + H(+). Functionally, catalyzes the reversible interconversion of hydroxy and oxo groups at position 3 of the steroid nucleus. Along with the 3 alpha-hydroxysteroid dehydrogenase and 3-oxo-reductase activities towards a variety of cis or trans fused A/B ring steroids, it also reduces several xenobiotic carbonyl compounds, including a metyrapone-based class of insecticides, to the respective alcohol metabolites. No detectable activity on testosterone, progesterone or 3-oxo-desogestrel. This Comamonas testosteroni (Pseudomonas testosteroni) protein is 3-alpha-hydroxysteroid dehydrogenase/carbonyl reductase (hsdA).